Reading from the N-terminus, the 101-residue chain is Apolipoprotein C-III (101 aa).

The signal sequence occupies residues 1 to 20 (MQPRMLLIVALVALLASARA). At Met64 the chain carries Methionine sulfoxide. The interval 69-101 (KSLKGYWSKFTDKFTGLWESGPEDQLTTPTLEP) is lipid-binding. O-linked (GalNAc...) threonine glycosylation occurs at Thr96.

This sequence belongs to the apolipoprotein C3 family. In terms of processing, the most abundant glycoforms are characterized by an O-linked disaccharide galactose linked to N-acetylgalactosamine (Gal-GalNAc), further modified with up to 3 sialic acid residues. Less abundant glycoforms are characterized by more complex and fucosylated glycan moieties. O-glycosylated on Thr-96 with a core 1 or possibly core 8 glycan. Synthesized predominantly in liver and to a lesser degree in intestine.

It localises to the secreted. Its function is as follows. Component of triglyceride-rich very low density lipoproteins (VLDL) and high density lipoproteins (HDL) in plasma. Plays a multifaceted role in triglyceride homeostasis. Intracellularly, promotes hepatic very low density lipoprotein 1 (VLDL1) assembly and secretion; extracellularly, attenuates hydrolysis and clearance of triglyceride-rich lipoproteins (TRLs). Impairs the lipolysis of TRLs by inhibiting lipoprotein lipase and the hepatic uptake of TRLs by remnant receptors. Formed of several curved helices connected via semiflexible hinges, so that it can wrap tightly around the curved micelle surface and easily adapt to the different diameters of its natural binding partners. This chain is Apolipoprotein C-III (Apoc3), found in Rattus norvegicus (Rat).